The following is a 271-amino-acid chain: MSHLLRKPQADEISQGVNIIHDVTSANSDLKYVGFKVVDLTPGSAYTEDLKKTECCIVAVTGKITVTDYDQTFESIGTRESVFERKPTDSVYVSNDRSFEITAVSGARVALCYSPSEHQLPTKLIKAEDNGVEHRGKLANKRTVHNILPDSDPSANSLLVVEVYTDSGNWSSYPPHKHDQDNLPAESFLEETYYHETDPPQGFVFQRVYTDDRSIDETMTAENENVVIVPAGYHPVGVPDGYTSYYLNVMAGPTRKWKFHNDPAHEWILER.

This sequence belongs to the isomerase IolB family.

The enzyme catalyses 5-deoxy-D-glucuronate = 5-dehydro-2-deoxy-D-gluconate. It participates in polyol metabolism; myo-inositol degradation into acetyl-CoA; acetyl-CoA from myo-inositol: step 4/7. In terms of biological role, involved in the isomerization of 5-deoxy-glucuronate (5DG) to 5-dehydro-2-deoxy-D-gluconate (DKG or 2-deoxy-5-keto-D-gluconate). This is 5-deoxy-glucuronate isomerase from Bacillus velezensis (strain DSM 23117 / BGSC 10A6 / LMG 26770 / FZB42) (Bacillus amyloliquefaciens subsp. plantarum).